We begin with the raw amino-acid sequence, 48 residues long: uncharacterized protein (48 aa).

The helical transmembrane segment at 25–47 (TFASIGVTVGVQIVILLIWGLSW) threads the bilayer.

The protein resides in the membrane. This is an uncharacterized protein from Archaeoglobus fulgidus (strain ATCC 49558 / DSM 4304 / JCM 9628 / NBRC 100126 / VC-16).